Consider the following 229-residue polypeptide: Heptaprenylglyceryl phosphate synthase (229 aa).

Lys-12 serves as a coordination point for sn-glycerol 1-phosphate. The Mg(2+) site is built by Asp-14 and Ser-40. Sn-glycerol 1-phosphate is bound by residues 159–164 (YLEYSG), Gly-189, and 209–210 (GN).

Belongs to the GGGP/HepGP synthase family. Group I subfamily. As to quaternary structure, homodimer. Mg(2+) is required as a cofactor.

The enzyme catalyses sn-glycerol 1-phosphate + all-trans-heptaprenyl diphosphate = 3-heptaprenyl-sn-glycero-1-phosphate + diphosphate. It participates in membrane lipid metabolism; glycerophospholipid metabolism. Functionally, prenyltransferase that catalyzes in vivo the transfer of the heptaprenyl moiety of heptaprenyl pyrophosphate (HepPP; 35 carbon atoms) to the C3 hydroxyl of sn-glycerol-1-phosphate (G1P), producing heptaprenylglyceryl phosphate (HepGP). This reaction is an ether-bond-formation step in the biosynthesis of archaea-type G1P-based membrane lipids found in Bacillales. The chain is Heptaprenylglyceryl phosphate synthase from Bacillus cereus (strain G9842).